An 86-amino-acid chain; its full sequence is RNA-binding protein Hfq (86 aa).

The Sm domain maps to Asp9–Val68.

The protein belongs to the Hfq family. In terms of assembly, homohexamer.

Its function is as follows. RNA chaperone that binds small regulatory RNA (sRNAs) and mRNAs to facilitate mRNA translational regulation in response to envelope stress, environmental stress and changes in metabolite concentrations. Also binds with high specificity to tRNAs. This chain is RNA-binding protein Hfq, found in Saccharophagus degradans (strain 2-40 / ATCC 43961 / DSM 17024).